A 203-amino-acid polypeptide reads, in one-letter code: Glycerol-3-phosphate acyltransferase (203 aa).

6 helical membrane-spanning segments follow: residues 1-21 (MPAW…GSIP), 52-72 (VGKG…AAAV), 73-93 (ALGS…GAVI), 115-135 (ILLA…LLGI), 140-160 (IVSF…WALG), and 161-181 (QPLP…AAHR).

The protein belongs to the PlsY family. Probably interacts with PlsX.

It localises to the cell inner membrane. The catalysed reaction is an acyl phosphate + sn-glycerol 3-phosphate = a 1-acyl-sn-glycero-3-phosphate + phosphate. It participates in lipid metabolism; phospholipid metabolism. Its function is as follows. Catalyzes the transfer of an acyl group from acyl-phosphate (acyl-PO(4)) to glycerol-3-phosphate (G3P) to form lysophosphatidic acid (LPA). This enzyme utilizes acyl-phosphate as fatty acyl donor, but not acyl-CoA or acyl-ACP. This Synechococcus sp. (strain JA-3-3Ab) (Cyanobacteria bacterium Yellowstone A-Prime) protein is Glycerol-3-phosphate acyltransferase.